Here is a 218-residue protein sequence, read N- to C-terminus: Peptidase E (218 aa).

Residues Ser123, Asp138, and His160 each act as charge relay system in the active site.

It belongs to the peptidase S51 family.

The protein resides in the cytoplasm. It catalyses the reaction Dipeptidase E catalyzes the hydrolysis of dipeptides Asp-|-Xaa. It does not act on peptides with N-terminal Glu, Asn or Gln, nor does it cleave isoaspartyl peptides.. Functionally, hydrolyzes dipeptides containing N-terminal aspartate residues. May play a role in allowing the cell to use peptide aspartate to spare carbon otherwise required for the synthesis of the aspartate family of amino acids. This Haemophilus influenzae (strain ATCC 51907 / DSM 11121 / KW20 / Rd) protein is Peptidase E.